The chain runs to 564 residues: Formate--tetrahydrofolate ligase (564 aa).

Residue 69 to 76 (TPAGEGKS) participates in ATP binding.

Belongs to the formate--tetrahydrofolate ligase family.

It catalyses the reaction (6S)-5,6,7,8-tetrahydrofolate + formate + ATP = (6R)-10-formyltetrahydrofolate + ADP + phosphate. It functions in the pathway one-carbon metabolism; tetrahydrofolate interconversion. This is Formate--tetrahydrofolate ligase from Renibacterium salmoninarum (strain ATCC 33209 / DSM 20767 / JCM 11484 / NBRC 15589 / NCIMB 2235).